The following is a 450-amino-acid chain: Adenylosuccinate lyase (450 aa).

Residues 9 to 10 (RY), 75 to 77 (HHD), and 101 to 102 (TS) contribute to the N(6)-(1,2-dicarboxyethyl)-AMP site. The active-site Proton donor/acceptor is histidine 149. Glutamine 223 is a binding site for N(6)-(1,2-dicarboxyethyl)-AMP. Residue serine 273 is the Proton donor/acceptor of the active site. Residues serine 274, 279–281 (KRN), and 318–322 (SVERV) each bind N(6)-(1,2-dicarboxyethyl)-AMP.

It belongs to the lyase 1 family. Adenylosuccinate lyase subfamily. As to quaternary structure, homotetramer. Residues from neighboring subunits contribute catalytic and substrate-binding residues to each active site.

It catalyses the reaction N(6)-(1,2-dicarboxyethyl)-AMP = fumarate + AMP. It carries out the reaction (2S)-2-[5-amino-1-(5-phospho-beta-D-ribosyl)imidazole-4-carboxamido]succinate = 5-amino-1-(5-phospho-beta-D-ribosyl)imidazole-4-carboxamide + fumarate. It functions in the pathway purine metabolism; AMP biosynthesis via de novo pathway; AMP from IMP: step 2/2. It participates in purine metabolism; IMP biosynthesis via de novo pathway; 5-amino-1-(5-phospho-D-ribosyl)imidazole-4-carboxamide from 5-amino-1-(5-phospho-D-ribosyl)imidazole-4-carboxylate: step 2/2. Catalyzes two reactions in de novo purine nucleotide biosynthesis. Catalyzes the breakdown of 5-aminoimidazole- (N-succinylocarboxamide) ribotide (SAICAR or 2-[5-amino-1-(5-phospho-beta-D-ribosyl)imidazole-4-carboxamido]succinate) to 5-aminoimidazole-4-carboxamide ribotide (AICAR or 5-amino-1-(5-phospho-beta-D-ribosyl)imidazole-4-carboxamide) and fumarate, and of adenylosuccinate (ADS or N(6)-(1,2-dicarboxyethyl)-AMP) to adenosine monophosphate (AMP) and fumarate. The protein is Adenylosuccinate lyase (purB) of Pyrococcus abyssi (strain GE5 / Orsay).